A 675-amino-acid polypeptide reads, in one-letter code: Pesticidal crystal protein Cry10Aa (675 aa).

The protein belongs to the delta endotoxin family.

Functionally, promotes colloidosmotic lysis by binding to the midgut epithelial cells of mosquitos. Active on Aedes aegypti. In Bacillus thuringiensis subsp. israelensis, this protein is Pesticidal crystal protein Cry10Aa (cry10Aa).